We begin with the raw amino-acid sequence, 494 residues long: Serine/arginine-rich splicing factor 4 (494 aa).

The region spanning 2-72 (PRVYIGRLSY…ERVIVEHARG (71 aa)) is the RRM 1 domain. Disordered stretches follow at residues 72-95 (GPRR…GRDK) and 169-494 (KIRL…HSRS). Residues serine 78 and serine 84 each carry the phosphoserine modification. Residues 104-177 (YRLIVENLSS…RKIRLVEDKP (74 aa)) enclose the RRM 2 domain. Basic residues-rich tracts occupy residues 179–206 (SRRR…KSRS) and 214–246 (SHSK…KKEK). Residues 247-256 (SRSPSKEKSR) show a composition bias toward basic and acidic residues. Residues 257-267 (SRSHSAGKSRS) show a composition bias toward basic residues. Basic and acidic residues predominate over residues 268-278 (KSKDQAEEKIQ). Basic residues predominate over residues 286–302 (PKSRSPSRHKSKSKSRS). 3 positions are modified to phosphoserine: serine 288, serine 290, and serine 292. Residues 303–327 (RSQERRVEEEKRGSVSRGRSQEKSL) show a composition bias toward basic and acidic residues. Composition is skewed to basic residues over residues 328–359 (RQSR…GRKR) and 367–382 (RSRS…KRGS). The segment covering 411–431 (VSKEREHAKSESSQREGRGES) has biased composition (basic and acidic residues). 5 positions are modified to phosphoserine: serine 431, serine 446, serine 456, serine 458, and serine 460. The segment covering 449–460 (KSKPNLPSESRS) has biased composition (low complexity). Over residues 461-494 (RSKSASKTRSRSKSRSRSASRSPSRSRSRSHSRS) the composition is skewed to basic residues.

Belongs to the splicing factor SR family. As to quaternary structure, found in a pre-mRNA splicing complex with SRSF4/SFRS4, SRSF5/SFRS5, SNRNP70, SNRPA1, SRRM1 and SRRM2. Interacts with PNN. Post-translationally, extensively phosphorylated on serine residues in the RS domain.

The protein resides in the nucleus speckle. Its function is as follows. Plays a role in alternative splice site selection during pre-mRNA splicing. Represses the splicing of MAPT/Tau exon 10. This is Serine/arginine-rich splicing factor 4 (SRSF4) from Homo sapiens (Human).